Reading from the N-terminus, the 324-residue chain is UDP-N-acetylenolpyruvoylglucosamine reductase (324 aa).

Residues 38–217 (AGGLAELMFQ…IRAEMDAVRQ (180 aa)) form the FAD-binding PCMH-type domain. Residue R183 is part of the active site. S232 (proton donor) is an active-site residue. E302 is a catalytic residue.

The protein belongs to the MurB family. It depends on FAD as a cofactor.

Its subcellular location is the cytoplasm. It catalyses the reaction UDP-N-acetyl-alpha-D-muramate + NADP(+) = UDP-N-acetyl-3-O-(1-carboxyvinyl)-alpha-D-glucosamine + NADPH + H(+). It participates in cell wall biogenesis; peptidoglycan biosynthesis. Functionally, cell wall formation. This Allorhizobium ampelinum (strain ATCC BAA-846 / DSM 112012 / S4) (Agrobacterium vitis (strain S4)) protein is UDP-N-acetylenolpyruvoylglucosamine reductase.